The chain runs to 297 residues: Large ribosomal subunit protein uL18 (297 aa).

Glycine 2 bears the N-acetylglycine mark. N6-acetyllysine occurs at positions 5 and 48. A Phosphoserine modification is found at serine 185. Lysine 220 carries the post-translational modification N6-acetyllysine; alternate. Lysine 220 is covalently cross-linked (Glycyl lysine isopeptide (Lys-Gly) (interchain with G-Cter in SUMO1); alternate). Residue lysine 220 forms a Glycyl lysine isopeptide (Lys-Gly) (interchain with G-Cter in SUMO2); alternate linkage. The residue at position 232 (threonine 232) is a Phosphothreonine. Residues 253–297 form a disordered region; sequence YEKKPKREVKKKRWNRPKMSLAQKKDRVAQKKASFLRAQERAAES. Basic residues predominate over residues 258–268; sequence KREVKKKRWNR. The residue at position 272 (serine 272) is a Phosphoserine.

It belongs to the universal ribosomal protein uL18 family. Component of the large ribosomal subunit (LSU). Part of the 5S RNP complex, which is a LSU subcomplex composed of the 5S RNA, RPL5 and RPL11. Component of a hexameric 5S RNP precursor complex, composed of 5S RNA, RRS1, RPF2/BXDC1, RPL5, RPL11 and HEATR3; this complex acts as a precursor for ribosome assembly. Interacts with NVL in an ATP-dependent manner. Interacts with RRP1B. Interacts with IPO5, IPO7 and KPNB1; these interactions may be involved in RPL5 nuclear import for the assembly of ribosomal subunits. Interacts with RRP1B.

Its subcellular location is the cytoplasm. It is found in the nucleus. It localises to the nucleolus. Component of the ribosome, a large ribonucleoprotein complex responsible for the synthesis of proteins in the cell. The small ribosomal subunit (SSU) binds messenger RNAs (mRNAs) and translates the encoded message by selecting cognate aminoacyl-transfer RNA (tRNA) molecules. The large subunit (LSU) contains the ribosomal catalytic site termed the peptidyl transferase center (PTC), which catalyzes the formation of peptide bonds, thereby polymerizing the amino acids delivered by tRNAs into a polypeptide chain. The nascent polypeptides leave the ribosome through a tunnel in the LSU and interact with protein factors that function in enzymatic processing, targeting, and the membrane insertion of nascent chains at the exit of the ribosomal tunnel. As part of the 5S RNP/5S ribonucleoprotein particle it is an essential component of the LSU, required for its formation and the maturation of rRNAs. It also couples ribosome biogenesis to p53/TP53 activation. As part of the 5S RNP it accumulates in the nucleoplasm and inhibits MDM2, when ribosome biogenesis is perturbed, mediating the stabilization and the activation of TP53. This Rattus norvegicus (Rat) protein is Large ribosomal subunit protein uL18 (Rpl5).